A 449-amino-acid polypeptide reads, in one-letter code: GTPase Der (449 aa).

2 consecutive EngA-type G domains span residues 4-174 (PIVA…PPKT) and 183-358 (LRVA…AQRQ). Residues 10-17 (GRPNVGKS), 57-61 (DTAGL), 126-129 (NKCD), 189-196 (GRPNVGKS), 236-240 (DTAGI), and 301-304 (NKWD) each bind GTP. A KH-like domain is found at 359–444 (KRIPTSELNN…PIVIVFRSRE (86 aa)).

It belongs to the TRAFAC class TrmE-Era-EngA-EngB-Septin-like GTPase superfamily. EngA (Der) GTPase family. As to quaternary structure, associates with the 50S ribosomal subunit.

Functionally, GTPase that plays an essential role in the late steps of ribosome biogenesis. This is GTPase Der from Chloroflexus aggregans (strain MD-66 / DSM 9485).